The primary structure comprises 420 residues: 4-hydroxy-3-methylbut-2-en-1-yl diphosphate synthase (flavodoxin) (420 aa).

Residues Cys307, Cys310, Cys353, and Glu360 each contribute to the [4Fe-4S] cluster site.

It belongs to the IspG family. The cofactor is [4Fe-4S] cluster.

It carries out the reaction (2E)-4-hydroxy-3-methylbut-2-enyl diphosphate + oxidized [flavodoxin] + H2O + 2 H(+) = 2-C-methyl-D-erythritol 2,4-cyclic diphosphate + reduced [flavodoxin]. It participates in isoprenoid biosynthesis; isopentenyl diphosphate biosynthesis via DXP pathway; isopentenyl diphosphate from 1-deoxy-D-xylulose 5-phosphate: step 5/6. In terms of biological role, converts 2C-methyl-D-erythritol 2,4-cyclodiphosphate (ME-2,4cPP) into 1-hydroxy-2-methyl-2-(E)-butenyl 4-diphosphate. The polypeptide is 4-hydroxy-3-methylbut-2-en-1-yl diphosphate synthase (flavodoxin) (Brucella suis (strain ATCC 23445 / NCTC 10510)).